Reading from the N-terminus, the 30-residue chain is Gamma-II crystallin (30 aa).

The 30-residue stretch at 1–30 folds into the Beta/gamma crystallin 'Greek key' domain; it reads GKITFYEDRNFQGRCYECSTDCPDLSPYFS.

This sequence belongs to the beta/gamma-crystallin family. In terms of assembly, monomer.

Crystallins are the dominant structural components of the vertebrate eye lens. The chain is Gamma-II crystallin from Rhizoprionodon acutus (Milk shark).